A 227-amino-acid chain; its full sequence is Cytochrome c oxidase subunit 2 (227 aa).

Over 1–14 (MTHPLQLGFQDATS) the chain is Mitochondrial intermembrane. A helical membrane pass occupies residues 15-45 (PIMEELLHFHDHTLMIVFLISSLVLYIITLM). Residues 46-59 (LTTKLTHTSTMDAQ) are Mitochondrial matrix-facing. The helical transmembrane segment at 60 to 87 (EVETVWTILPAIILILIALPSLRILYMM) threads the bilayer. The Mitochondrial intermembrane segment spans residues 88 to 227 (DEINNPLLTV…YFEDWSVSMT (140 aa)). The Cu cation site is built by His161, Cys196, Glu198, Cys200, His204, and Met207. A Mg(2+)-binding site is contributed by Glu198. Tyr218 carries the post-translational modification Phosphotyrosine.

The protein belongs to the cytochrome c oxidase subunit 2 family. In terms of assembly, component of the cytochrome c oxidase (complex IV, CIV), a multisubunit enzyme composed of 14 subunits. The complex is composed of a catalytic core of 3 subunits MT-CO1, MT-CO2 and MT-CO3, encoded in the mitochondrial DNA, and 11 supernumerary subunits COX4I, COX5A, COX5B, COX6A, COX6B, COX6C, COX7A, COX7B, COX7C, COX8 and NDUFA4, which are encoded in the nuclear genome. The complex exists as a monomer or a dimer and forms supercomplexes (SCs) in the inner mitochondrial membrane with NADH-ubiquinone oxidoreductase (complex I, CI) and ubiquinol-cytochrome c oxidoreductase (cytochrome b-c1 complex, complex III, CIII), resulting in different assemblies (supercomplex SCI(1)III(2)IV(1) and megacomplex MCI(2)III(2)IV(2)). Found in a complex with TMEM177, COA6, COX18, COX20, SCO1 and SCO2. Interacts with TMEM177 in a COX20-dependent manner. Interacts with COX20. Interacts with COX16. It depends on Cu cation as a cofactor.

The protein resides in the mitochondrion inner membrane. It catalyses the reaction 4 Fe(II)-[cytochrome c] + O2 + 8 H(+)(in) = 4 Fe(III)-[cytochrome c] + 2 H2O + 4 H(+)(out). Component of the cytochrome c oxidase, the last enzyme in the mitochondrial electron transport chain which drives oxidative phosphorylation. The respiratory chain contains 3 multisubunit complexes succinate dehydrogenase (complex II, CII), ubiquinol-cytochrome c oxidoreductase (cytochrome b-c1 complex, complex III, CIII) and cytochrome c oxidase (complex IV, CIV), that cooperate to transfer electrons derived from NADH and succinate to molecular oxygen, creating an electrochemical gradient over the inner membrane that drives transmembrane transport and the ATP synthase. Cytochrome c oxidase is the component of the respiratory chain that catalyzes the reduction of oxygen to water. Electrons originating from reduced cytochrome c in the intermembrane space (IMS) are transferred via the dinuclear copper A center (CU(A)) of subunit 2 and heme A of subunit 1 to the active site in subunit 1, a binuclear center (BNC) formed by heme A3 and copper B (CU(B)). The BNC reduces molecular oxygen to 2 water molecules using 4 electrons from cytochrome c in the IMS and 4 protons from the mitochondrial matrix. The polypeptide is Cytochrome c oxidase subunit 2 (MT-CO2) (Carlito syrichta (Philippine tarsier)).